A 440-amino-acid polypeptide reads, in one-letter code: tRNA modification GTPase MnmE (440 aa).

Arg-22, Glu-79, and Lys-118 together coordinate (6S)-5-formyl-5,6,7,8-tetrahydrofolate. One can recognise a TrmE-type G domain in the interval 214-366 (GLIFTILGKP…LKTMLEAEAR (153 aa)). GTP-binding positions include 224-229 (NAGKSS), 243-249 (SSQPGTT), and 268-271 (DTAG). Residues Ser-228 and Thr-249 each contribute to the Mg(2+) site. (6S)-5-formyl-5,6,7,8-tetrahydrofolate is bound at residue Lys-440.

This sequence belongs to the TRAFAC class TrmE-Era-EngA-EngB-Septin-like GTPase superfamily. TrmE GTPase family. In terms of assembly, homodimer. Heterotetramer of two MnmE and two MnmG subunits. K(+) serves as cofactor.

It localises to the cytoplasm. Exhibits a very high intrinsic GTPase hydrolysis rate. Involved in the addition of a carboxymethylaminomethyl (cmnm) group at the wobble position (U34) of certain tRNAs, forming tRNA-cmnm(5)s(2)U34. This Granulibacter bethesdensis (strain ATCC BAA-1260 / CGDNIH1) protein is tRNA modification GTPase MnmE.